A 118-amino-acid polypeptide reads, in one-letter code: Hisactophilin-2 (118 aa).

G2 is lipidated: N-myristoyl glycine. A contains several HHXH repeats region spans residues 8–109 (AHNGHYLSAE…HVSTSHHHDH (102 aa)). Tandem repeats lie at residues 34-46 (FHIENHGSKVALR) and 74-86 (FHLEHHHGKVSIK). Residues 34 to 86 (FHIENHGSKVALRTHCGKYVSIGDHKQVYLSHHLHGDHSLFHLEHHHGKVSIK) are 2 X 13 AA approximate repeats. Residues 99–118 (GHVSTSHHHDHHATFEEHIL) form a disordered region.

Belongs to the hisactophilin family. In terms of assembly, homodimer or heterodimer of hatA and hatB, linked by a disulfide bond. In terms of processing, phosphorylated.

The protein localises to the cytoplasm. Its subcellular location is the cell membrane. Functionally, may act as an intracellular pH sensor that links chemotactic signals to responses in the microfilament system of the cells by nucleating actin polymerization or stabilizing the filaments. This Dictyostelium discoideum (Social amoeba) protein is Hisactophilin-2 (hatB).